A 269-amino-acid polypeptide reads, in one-letter code: 3-deoxy-manno-octulosonate cytidylyltransferase (269 aa).

This sequence belongs to the KdsB family.

It localises to the cytoplasm. The catalysed reaction is 3-deoxy-alpha-D-manno-oct-2-ulosonate + CTP = CMP-3-deoxy-beta-D-manno-octulosonate + diphosphate. It functions in the pathway nucleotide-sugar biosynthesis; CMP-3-deoxy-D-manno-octulosonate biosynthesis; CMP-3-deoxy-D-manno-octulosonate from 3-deoxy-D-manno-octulosonate and CTP: step 1/1. Its pathway is bacterial outer membrane biogenesis; lipopolysaccharide biosynthesis. Activates KDO (a required 8-carbon sugar) for incorporation into bacterial lipopolysaccharide in Gram-negative bacteria. This is 3-deoxy-manno-octulosonate cytidylyltransferase from Cupriavidus necator (strain ATCC 17699 / DSM 428 / KCTC 22496 / NCIMB 10442 / H16 / Stanier 337) (Ralstonia eutropha).